Consider the following 862-residue polypeptide: Interleukin-12 receptor subunit beta-2 (862 aa).

An N-terminal signal peptide occupies residues 1-23; it reads MAHTFRGCSLAFMFIITWLLIKA. Residues 24 to 622 are Extracellular-facing; sequence KIDACKRGDV…REFCLQGKAN (599 aa). N-linked (GlcNAc...) asparagine glycosylation is found at asparagine 48, asparagine 129, asparagine 166, asparagine 195, and asparagine 271. 5 Fibronectin type-III domains span residues 126–221, 226–319, 320–419, 423–520, and 521–620; these read QPQN…FLDI, PPWD…TPEE, EPTG…LCEA, APRQ…KHKA, and PLSG…LQGK. The WSXWS motif signature appears at 305–309; the sequence is WSDWS. N-linked (GlcNAc...) asparagine glycans are attached at residues asparagine 347, asparagine 376, and asparagine 480. Residues 623 to 643 traverse the membrane as a helical segment; the sequence is WMAFVAPSICIAIIMVGIFST. The Cytoplasmic portion of the chain corresponds to 644 to 862; the sequence is HYFQQKVFVL…LKMRCDSLML (219 aa). A Box 1 motif motif is present at residues 662 to 670; it reads CSREIPDPA. A disordered region spans residues 725–755; it reads NWPQREKGIQGHQASEKDMMHSASSPPPPRA. Positions 728–744 are enriched in basic and acidic residues; sequence QREKGIQGHQASEKDMM. A required for STAT4 binding region spans residues 796-801; the sequence is THDGYL. A Phosphotyrosine modification is found at tyrosine 800.

It belongs to the type I cytokine receptor family. Type 2 subfamily. Heterodimer/heterooligomer; disulfide-linked. The functional high affinity IL12 receptor is composed of I12RB1 and IL12RB2. Il12RB2 binds JAK2 (via its N-terminal) through a membrane-proximal region of the cytoplasmic domain. Interaction, in vitro and in vivo, with SOCS3 (via its SH2 domain) inhibits the STAT4-mediated activation. Binds STAT4 through a membrane-distal C-terminal region. Post-translationally, on IL12 binding, phosphorylated on C-terminal tyrosine residues by JAK2. Phosphorylation on Tyr-800 is required for STAT4 binding and activation, and for SOCS3 binding. Isoform 2 is expressed at similar levels in both naive and activated T-cells.

The protein resides in the membrane. In terms of biological role, receptor for interleukin-12. This subunit is the signaling component coupling to the JAK2/STAT4 pathway. Promotes the proliferation of T-cells as well as NK cells. Induces the promotion of T-cells towards the Th1 phenotype by strongly enhancing IFN-gamma production. The chain is Interleukin-12 receptor subunit beta-2 (IL12RB2) from Homo sapiens (Human).